The sequence spans 293 residues: MGLWAELCISLRGLSFFLVLMTGEGTRGGSFKESLGVCSKQTLLVPLRYNESYSQPVYKPYLTLCAGRRICSTYRTTYRVAWREVRREVPQTHVVCCQGWKKPHPGALTCDAICSKPCLNGGVCTGPDRCECAPGWGGKHCHVDVDECRASLTLCSHGCLNTLGSFLCSCPHPLVLGLDGRTCAGGPPESPTSASILSVAVREADSEEERALRWEVAELRGRLEKLEQWATQAGAWVRAVLPMPPEELRPEQVAELWGRGDRIESLSDQVLLLEERLGACACEDNSLGPSLRG.

The signal sequence occupies residues 1–28 (MGLWAELCISLRGLSFFLVLMTGEGTRG). The EMI domain maps to 34-112 (SLGVCSKQTL…PHPGALTCDA (79 aa)). 9 disulfides stabilise this stretch: Cys38–Cys97, Cys65–Cys71, Cys96–Cys110, Cys114–Cys124, Cys118–Cys130, Cys132–Cys141, Cys148–Cys159, Cys155–Cys168, and Cys170–Cys183. N-linked (GlcNAc...) asparagine glycosylation is present at Asn50. The 32-residue stretch at 111–142 (DAICSKPCLNGGVCTGPDRCECAPGWGGKHCH) folds into the EGF-like 1 domain. The 41-residue stretch at 144-184 (DVDECRASLTLCSHGCLNTLGSFLCSCPHPLVLGLDGRTCA) folds into the EGF-like 2; calcium-binding domain. A coiled-coil region spans residues 206 to 235 (SEEERALRWEVAELRGRLEKLEQWATQAGA).

In terms of tissue distribution, ubiquitously expressed in brain, kidney, thymus and lung.

The protein localises to the secreted. This chain is Epidermal growth factor-like protein 8 (Egfl8), found in Mus musculus (Mouse).